The primary structure comprises 225 residues: PKHD-type hydroxylase YbiX (225 aa).

Residues 78–177 (TLSTPLFNRY…RVASFMWIQS (100 aa)) form the Fe2OG dioxygenase domain. The Fe cation site is built by His96, Asp98, and His158. Arg168 contributes to the 2-oxoglutarate binding site.

Fe(2+) serves as cofactor. The cofactor is L-ascorbate.

The chain is PKHD-type hydroxylase YbiX from Escherichia coli (strain 55989 / EAEC).